The sequence spans 522 residues: Maturase K (522 aa).

This sequence belongs to the intron maturase 2 family. MatK subfamily.

The protein resides in the plastid. It is found in the chloroplast. Its function is as follows. Usually encoded in the trnK tRNA gene intron. Probably assists in splicing its own and other chloroplast group II introns. This chain is Maturase K, found in Pillansia templemannii.